The following is a 105-amino-acid chain: Small ribosomal subunit protein uS10 (105 aa).

The protein belongs to the universal ribosomal protein uS10 family. In terms of assembly, part of the 30S ribosomal subunit.

Functionally, involved in the binding of tRNA to the ribosomes. The sequence is that of Small ribosomal subunit protein uS10 from Chlamydia muridarum (strain MoPn / Nigg).